Here is a 304-residue protein sequence, read N- to C-terminus: Cell surface-binding protein OPG105 (304 aa).

One can recognise an Alpha-carbonic anhydrase domain in the interval 1–235 (MPQQLSPINI…NDDTQVYYSG (235 aa)). The Virion surface portion of the chain corresponds to 1 to 275 (MPQQLSPINI…YQKYIEGNKT (275 aa)). A helical transmembrane segment spans residues 276–294 (FAIIAIVFVFILTAILFFM). At 295-304 (SQRYSREKQN) the chain is on the intravirion side.

It belongs to the alpha-carbonic anhydrase family. In terms of assembly, homodimer; disulfide-linked. Post-translationally, apparently non-glycosylated.

It is found in the virion membrane. In terms of biological role, binds to chondroitin sulfate on the cell surface to provide virion attachment to target cell. This chain is Cell surface-binding protein OPG105 (OPG105), found in Vaccinia virus (strain Ankara) (VACV).